Here is a 182-residue protein sequence, read N- to C-terminus: RNA chaperone ProQ (182 aa).

Positions Glu125–Asp160 are disordered.

It belongs to the ProQ family.

It localises to the cytoplasm. Functionally, RNA chaperone with significant RNA binding, RNA strand exchange and RNA duplexing activities. This is RNA chaperone ProQ from Haemophilus ducreyi (strain 35000HP / ATCC 700724).